Here is a 106-residue protein sequence, read N- to C-terminus: Large ribosomal subunit protein bL21 (106 aa).

It belongs to the bacterial ribosomal protein bL21 family. Part of the 50S ribosomal subunit. Contacts protein L20.

In terms of biological role, this protein binds to 23S rRNA in the presence of protein L20. The polypeptide is Large ribosomal subunit protein bL21 (Chlamydia felis (strain Fe/C-56) (Chlamydophila felis)).